A 1047-amino-acid chain; its full sequence is Ras GTPase-activating protein 1 (1047 aa).

Met1 is modified (N-acetylmethionine). An SH2 1 domain is found at 181–272 (WYHGKLDRTI…LKGEKLLYPV (92 aa)). The region spanning 279–341 (EDRRRVRAIL…VEDLVEEVGR (63 aa)) is the SH3 domain. Positions 351–441 (WFHGKISKQE…VEGYYLKEPV (91 aa)) constitute an SH2 2 domain. The 104-residue stretch at 474–577 (NIVKKGYLLK…WMKGLQAFCN (104 aa)) folds into the PH domain. One can recognise a C2 domain in the interval 577-690 (NLRKSSPGTS…QKGHATDEWF (114 aa)). A Phosphotyrosine modification is found at Tyr615. Residues 764-974 (KLESLLLCTL…HRMIMFLDEL (211 aa)) enclose the Ras-GAP domain. Residue Ser831 is modified to Phosphoserine.

As to quaternary structure, interacts with SQSTM1. Interacts with SPSB1; the interaction does not promote degradation. Interacts with CAV2 (tyrosine phosphorylated form). Directly interacts with NCK1. Interacts with PDGFRB (tyrosine phosphorylated). Interacts (via SH2 domain) with the 'Tyr-9' phosphorylated form of PDPK1. Interacts with tyrosine-phosphorylated EPHB4. The N-terminus is blocked. In terms of processing, phosphorylated by SRC and LCK. The phosphorylation SRC inhibits its ability to stimulate the Ras-GTPase activity, whereas phosphorylation by LCK does not display any effect on stimulation activity. In terms of tissue distribution, in placental villi, detected only in the trophoblast layer (cytotrophoblast and syncytiotrophoblast). Not detected in stromal, endothelial or Hofbauer cells (at protein level).

The protein localises to the cytoplasm. In terms of biological role, inhibitory regulator of the Ras-cyclic AMP pathway. Stimulates the GTPase of normal but not oncogenic Ras p21; this stimulation may be further increased in the presence of NCK1. This is Ras GTPase-activating protein 1 (RASA1) from Homo sapiens (Human).